The chain runs to 237 residues: Class B acid phosphatase (237 aa).

An N-terminal signal peptide occupies residues 1–23 (MRKVTLVFSAIAFAFSLNGVVQA). Asp69 acts as the Nucleophile in catalysis. Asp69 and Asp71 together coordinate Mg(2+). The active-site Proton donor is Asp71. Substrate is bound by residues 137-138 (TG) and Lys177. Asp192 lines the Mg(2+) pocket.

This sequence belongs to the class B bacterial acid phosphatase family. As to quaternary structure, homotetramer. It depends on Mg(2+) as a cofactor.

The protein resides in the periplasm. The catalysed reaction is a phosphate monoester + H2O = an alcohol + phosphate. Functionally, dephosphorylates several organic phosphate monoesters. Also has a phosphotransferase activity catalyzing the transfer of low-energy phosphate groups from organic phosphate monoesters to free hydroxyl groups of various organic compounds. This is Class B acid phosphatase from Xenorhabdus bovienii (strain SS-2004) (Xenorhabdus nematophila subsp. bovienii).